Consider the following 460-residue polypeptide: MENIWLEAQTNLKQVLTEQTYSTWIDPLKFLGATVDTIVLEVPSSFFQKWVTDKYLAMIKEAISAVNGKSYQIEFHVADEKPEAAPEEKPEKEGKPAREKEKDKDKEKEKDREKEKDKKELVPNLNPKYTFESFVSGPSNQFAYAASQAVANKPATNYNPLFIYGGVGLGKTHLVNAIGNHILAKNPKAKICYYSSEKFMNEMINSLRYKKMDEFRNKFRKMDLLLIDDIQFMAGKEATQEEFFHTFNALYESHKQIVVTSDKFPKDIPGLEERLRSRFEWGLIADIQPPGVETKVAILKKKSDMHAVNLPDDVALFLAEGANSNIRELEGMLIRLEAFASLTGQEITLSMAREVMKDIIVEKTRDITVEMIQKTVAEHFRIKVSELKSDKRIKTLVVPRQIAIYICRELTKASYPEIGEKFGGKDHSTIIHSVKKIEKQMAGDDEFKASVEDIRKKLFT.

Residues 1–83 (MENIWLEAQT…EFHVADEKPE (83 aa)) are domain I, interacts with DnaA modulators. Over residues 78–121 (ADEKPEAAPEEKPEKEGKPAREKEKDKDKEKEKDREKEKDKKEL) the composition is skewed to basic and acidic residues. The tract at residues 78-122 (ADEKPEAAPEEKPEKEGKPAREKEKDKDKEKEKDREKEKDKKELV) is disordered. Residues 83-123 (EAAPEEKPEKEGKPAREKEKDKDKEKEKDREKEKDKKELVP) form a domain II region. Positions 124-340 (NLNPKYTFES…GMLIRLEAFA (217 aa)) are domain III, AAA+ region. ATP is bound by residues glycine 168, glycine 170, lysine 171, and threonine 172. A domain IV, binds dsDNA region spans residues 341-460 (SLTGQEITLS…VEDIRKKLFT (120 aa)).

This sequence belongs to the DnaA family. In terms of assembly, oligomerizes as a right-handed, spiral filament on DNA at oriC.

Its subcellular location is the cytoplasm. Functionally, plays an essential role in the initiation and regulation of chromosomal replication. ATP-DnaA binds to the origin of replication (oriC) to initiate formation of the DNA replication initiation complex once per cell cycle. Binds the DnaA box (a 9 base pair repeat at the origin) and separates the double-stranded (ds)DNA. Forms a right-handed helical filament on oriC DNA; dsDNA binds to the exterior of the filament while single-stranded (ss)DNA is stabiized in the filament's interior. The ATP-DnaA-oriC complex binds and stabilizes one strand of the AT-rich DNA unwinding element (DUE), permitting loading of DNA polymerase. After initiation quickly degrades to an ADP-DnaA complex that is not apt for DNA replication. Binds acidic phospholipids. The protein is Chromosomal replication initiator protein DnaA of Geobacter sp. (strain M21).